Here is a 185-residue protein sequence, read N- to C-terminus: Intraflagellar transport protein 22 homolog (185 aa).

GTP-binding positions include G10–T17, D63–D67, and H123–G126. At S137 the chain carries Phosphoserine.

It belongs to the small GTPase superfamily. Rab family. In terms of assembly, component of the IFT complex B, at least composed of IFT20, IFT22, IFT25, IFT27, IFT46, IFT52, TRAF3IP1/IFT54, IFT57, IFT74, IFT80, IFT81, and IFT88. Interacts with IFT88. Interacts with CFAP61.

The protein localises to the cell projection. The protein resides in the cilium. Functionally, small GTPase-like component of the intraflagellar transport (IFT) complex B. The protein is Intraflagellar transport protein 22 homolog (Ift22) of Mus musculus (Mouse).